Consider the following 386-residue polypeptide: MTNNPLIPQSKLPQLGTTIFTQMSALAQQHQAINLSQGFPDFDGPRYLQERLAHHVAQGANQYAPMTGVQALREAIAQKTERLYGYQPDADSDITVTAGATEALYAAITALVRNGDEVICFDPSYDSYAPAIALSGGIVKRMALQPPHFRVDWQEFAALLSERTRLVILNTPHNPSATVWQQADFAALWQAIAGHEIFVISDEVYEHINFSQQGHASVLAHPQLRERAVAVSSFGKTYHMTGWKVGYCVAPAPISAEIRKVHQYLTFSVNTPAQLALADMLRAEPEHYLALPDFYRQKRDILVNALNESRLEILPCEGTYFLLVDYSAVSTLDDVEFCQWLTQEHGVAAIPLSVFCADPFPHKLIRLCFAKKESTLLAAAERLRQL.

N6-(pyridoxal phosphate)lysine is present on K236.

It belongs to the class-I pyridoxal-phosphate-dependent aminotransferase family. In terms of assembly, homodimer. The cofactor is pyridoxal 5'-phosphate.

It is found in the cytoplasm. It carries out the reaction a 2-oxocarboxylate + L-methionine = 4-methylsulfanyl-2-oxobutanoate + an L-alpha-amino acid. Functionally, shows aminotransferase activity with methionine and histidine as substrates, and to a lesser extent also with phenylalanine. This is Methionine aminotransferase (ybdL) from Escherichia coli (strain K12).